Consider the following 456-residue polypeptide: MLHLYNSLTRKKEPFVSLRPGKIGMYVCGITVYDHCHLGHARSMVAFDVMVRYLRSQGFDVTYVRNITDIDDKIIARASERDVSIDELTAQYIDAMNNDTHALNILPPDHEPRATGHIETIIRLIQRLLEKGSAYVSENGDVCYEVDTFPEYGKLSHKDIEGLVSGSRVEIVKEKRSPLDFVLWKKAKPGEPSWPSPWGEGRPGWHIECSAMAMHELGEQFDIHGGGLDLQFPHHENEIAQSEAATGKPFANYWLHVGMLQVNGEKMAKSIGNFYTIADVLKEHHPEVIRYFLLSSHYRSPLNYSEENLLNAKKALIRLYQAVKDVPPQTADSKLDEYWQEQFNQAMNDDFNTPVALSVLFQLAHEVNKSNSPALAHTLKNLAGILGFLQKDPESFLQSGLAEEEKLVIEQLIAERLQARAERNWAKADQIRTDLLSKGIELEDGATGTTWRRIAE.

Cysteine 28 contributes to the Zn(2+) binding site. The short motif at 30–40 is the 'HIGH' region element; the sequence is ITVYDHCHLGH. Zn(2+)-binding residues include cysteine 209, histidine 234, and glutamate 238. The 'KMSKS' region signature appears at 266-270; sequence KMAKS. ATP is bound at residue lysine 269.

It belongs to the class-I aminoacyl-tRNA synthetase family. In terms of assembly, monomer. The cofactor is Zn(2+).

It localises to the cytoplasm. The enzyme catalyses tRNA(Cys) + L-cysteine + ATP = L-cysteinyl-tRNA(Cys) + AMP + diphosphate. This chain is Cysteine--tRNA ligase, found in Legionella pneumophila (strain Corby).